Here is a 649-residue protein sequence, read N- to C-terminus: MWPQPHLPTHPHLPTHPHLPTHPMMSKETRQSKLAEAKEQLTDHHPQTNPSVGTAASDTKKKKINNGTNPETTTSGGCHSPEDEQKASHQHQEALRRELEAQVHTIRILTCQKTELQMALYYSQHAVKQLEGEARDLISRLHDSWKFAGELEQALSAVATQKKKADRYIEELTKERDALSLELYRNTITDEELKEKNAKLQEKLQLVESEKSEIQLNVKELKRKLERAKLLLPQQQLQAEADHLGKELQSVSAKLQAQVEENELWNRLNQQQEEKMWRQEEKIQEWEEKIQEQEEKIREQEEKIREQEEKMRRQEEMMWEKEEKMRRQEEMMWEKEEKMRRLEEMMWEKEEKIRELEEKMHEQEKIREQEEKRQEEEKIREQEKRQEQEAKMWRQEEKIREQEEKIREQEKKMWRQEEKIHEQEKIREEEKRQEQEEMWRQEEKIREQEEIWRQKEKMHEQEKIRKQEEKVWRQEEKMHDQEEKIREQEEKMWRQEEKIREQEEKIREQEEKIREQEEKIREQEEMMQEQEEKMGEQEEKMQEQEKMRRQEEKIREQEEKIREQKEKIREQEEKIWEQEEKIREQEEMMQEQEEKMWEQEEKMCEQEEKMQEQEEKMRRQEEKMWEQEVRLRQQEEKMQEHQEHLEAAI.

5 disordered regions span residues 1–94, 300–330, 358–440, 455–572, and 584–620; these read MWPQ…HQEA, QEEK…RQEE, EKMH…EMWR, KEKM…REQE, and EQEE…MRRQ. The segment covering 10 to 23 has biased composition (low complexity); sequence HPHLPTHPHLPTHP. Residues 25–46 show a composition bias toward basic and acidic residues; it reads MSKETRQSKLAEAKEQLTDHHP. Composition is skewed to polar residues over residues 47–57 and 65–77; these read QTNPSVGTAAS and NNGT…TSGG. Residues 80–94 are compositionally biased toward basic and acidic residues; sequence SPEDEQKASHQHQEA. The stretch at 151 to 644 forms a coiled coil; that stretch reads LEQALSAVAT…EEKMQEHQEH (494 aa).

Belongs to the GOLGA6 family.

This chain is Golgin subfamily A member 6-like protein 26 (GOLGA6L26), found in Homo sapiens (Human).